The following is a 193-amino-acid chain: MFVSRLAASGLLLLALLALSLDGKPVHQSKPGRSPPISPLSAQQWMPEGRPPHPIPPLSVQQWSQGRPRSEVPPVVVQPHESPAGGTTAFREELSPGPEAASGPAAPHRLPKSKGASATSAASRPMRDLRTDGKQERQKWGRMVQPDHHAAPGGGGGGGGGARRMKGLAKKAMGKGCFGHKLDRIGSTSGLGC.

The first 23 residues, M1 to G23, serve as a signal peptide directing secretion. The propeptide occupies K24–H27. Residues P25 to M173 are disordered. Position 28 is a pyrrolidone carboxylic acid (Q28). 2 propeptides span residues L40 to Q43 and L58 to S64. At Q65 the chain carries Pyrrolidone carboxylic acid. A propeptide spanning residues V75–A169 is cleaved from the precursor. Residues S95–S123 are compositionally biased toward low complexity. Positions P125–A150 are enriched in basic and acidic residues. The span at P152–A162 shows a compositional bias: gly residues. Residues R163–M173 show a composition bias toward basic residues. C177 and C193 form a disulfide bridge.

In the N-terminal section; belongs to the bradykinin-potentiating peptide family. This sequence in the C-terminal section; belongs to the natriuretic peptide family. Expressed by the venom gland.

It is found in the secreted. Its function is as follows. Bradykinin-potentiating peptide both inhibits the activity of the angiotensin-converting enzyme (ACE) and enhances the action of bradykinin by inhibiting the peptidases that inactivate it. It acts as an indirect hypotensive agent. Neither synthetic Tf1, nor synthetic Tf2 show bradykinin-potentiating effects. Functionally, has a vasorelaxant activity in rat aortic strips and a diuretic potency in anesthetized rats. Has a vasorelaxant activity in rat aortic strips and a diuretic potency in anesthetized rats. Is as potent as Tf-CNP. The chain is Bradykinin-potentiating and C-type natriuretic peptides from Protobothrops flavoviridis (Habu).